Here is a 218-residue protein sequence, read N- to C-terminus: Small ribosomal subunit protein uS3 (218 aa).

A KH type-2 domain is found at 38–106 (IREYINKRLQ…REHINIVEIK (69 aa)).

It belongs to the universal ribosomal protein uS3 family. Part of the 30S ribosomal subunit. Forms a tight complex with proteins S10 and S14.

In terms of biological role, binds the lower part of the 30S subunit head. Binds mRNA in the 70S ribosome, positioning it for translation. This Geobacillus stearothermophilus (Bacillus stearothermophilus) protein is Small ribosomal subunit protein uS3.